The primary structure comprises 92 residues: Cell division topological specificity factor (92 aa).

The protein belongs to the MinE family.

Its function is as follows. Prevents the cell division inhibition by proteins MinC and MinD at internal division sites while permitting inhibition at polar sites. This ensures cell division at the proper site by restricting the formation of a division septum at the midpoint of the long axis of the cell. In Colwellia psychrerythraea (strain 34H / ATCC BAA-681) (Vibrio psychroerythus), this protein is Cell division topological specificity factor.